We begin with the raw amino-acid sequence, 301 residues long: Heat shock factor protein HSF24 (301 aa).

Residues 7–101 (PAPFLLKTYQ…LLTAIRRRKT (95 aa)) mediate DNA binding. Disordered regions lie at residues 103-160 (TSTP…DENE) and 221-244 (GVKD…DEKG). The segment covering 107 to 142 (AGGKSVAAGASASPDNSGDDIGSSSTSSPDSKNPGS) has biased composition (low complexity). Residues 233–243 (DNDDKEDDDEK) show a composition bias toward acidic residues.

It belongs to the HSF family. Homotrimer. In terms of processing, exhibits temperature-dependent phosphorylation.

Its subcellular location is the nucleus. DNA-binding protein that specifically binds heat shock promoter elements (HSE) and activates transcription. The polypeptide is Heat shock factor protein HSF24 (HSF24) (Solanum peruvianum (Peruvian tomato)).